The sequence spans 295 residues: Probable deoxyhypusine synthase (295 aa).

The active-site Nucleophile is Lys-267.

It belongs to the deoxyhypusine synthase family. NAD(+) serves as cofactor.

The catalysed reaction is [eIF5A protein]-L-lysine + spermidine = [eIF5A protein]-deoxyhypusine + propane-1,3-diamine. Its pathway is protein modification; eIF5A hypusination. Catalyzes the NAD-dependent oxidative cleavage of spermidine and the subsequent transfer of the butylamine moiety of spermidine to the epsilon-amino group of a specific lysine residue of the eIF-5A precursor protein to form the intermediate deoxyhypusine residue. The protein is Probable deoxyhypusine synthase of Pyrobaculum calidifontis (strain DSM 21063 / JCM 11548 / VA1).